Reading from the N-terminus, the 167-residue chain is Photosystem I assembly protein Ycf3 (167 aa).

TPR repeat units lie at residues 35-68 (AFAY…EVDA), 72-105 (SYIL…NPSL), and 120-153 (GEQA…APTS).

Belongs to the Ycf3 family.

It localises to the plastid. Its subcellular location is the chloroplast thylakoid membrane. In terms of biological role, essential for the assembly of the photosystem I (PSI) complex. May act as a chaperone-like factor to guide the assembly of the PSI subunits. This Chlorokybus atmophyticus (Soil alga) protein is Photosystem I assembly protein Ycf3.